Here is a 406-residue protein sequence, read N- to C-terminus: Argininosuccinate synthase (406 aa).

Residues 12 to 20 (AYSGGLDTS) and alanine 39 contribute to the ATP site. Positions 90 and 95 each coordinate L-citrulline. Glycine 120 lines the ATP pocket. Threonine 122, asparagine 126, and aspartate 127 together coordinate L-aspartate. Asparagine 126 contributes to the L-citrulline binding site. L-citrulline-binding residues include arginine 130, serine 179, serine 188, glutamate 264, and tyrosine 276.

The protein belongs to the argininosuccinate synthase family. Type 1 subfamily. In terms of assembly, homotetramer.

Its subcellular location is the cytoplasm. The enzyme catalyses L-citrulline + L-aspartate + ATP = 2-(N(omega)-L-arginino)succinate + AMP + diphosphate + H(+). It functions in the pathway amino-acid biosynthesis; L-arginine biosynthesis; L-arginine from L-ornithine and carbamoyl phosphate: step 2/3. This chain is Argininosuccinate synthase, found in Citrifermentans bemidjiense (strain ATCC BAA-1014 / DSM 16622 / JCM 12645 / Bem) (Geobacter bemidjiensis).